The primary structure comprises 163 residues: K88 minor fimbrial subunit FaeF (163 aa).

An N-terminal signal peptide occupies residues 1-22 (MKKTMMAAALVLSALSIQSALA).

It localises to the fimbrium. K88 minor fimbrial subunit, plays an essential role in the biogenesis of the K88 fimbriae. required at some step in the initiation and/or elongation of the K88 fimbriae. The sequence is that of K88 minor fimbrial subunit FaeF (faeF) from Escherichia coli.